Reading from the N-terminus, the 102-residue chain is Small ribosomal subunit protein uS10 (102 aa).

This sequence belongs to the universal ribosomal protein uS10 family. In terms of assembly, part of the 30S ribosomal subunit.

Functionally, involved in the binding of tRNA to the ribosomes. This Leuconostoc citreum (strain KM20) protein is Small ribosomal subunit protein uS10.